We begin with the raw amino-acid sequence, 194 residues long: Large ribosomal subunit protein bL27c (194 aa).

The transit peptide at 1-57 directs the protein to the chloroplast; that stretch reads MAVTTSMSFNLMASFRGMSLSSSSSSSFFKGEFGPSSLRLPNKSPLSVSPFPLTIES. Residues 57–76 form a disordered region; that stretch reads SAHKKGAGSTKNGRDSKGQR.

In terms of assembly, component of the chloroplast large ribosomal subunit (LSU). Mature 70S chloroplast ribosomes of higher plants consist of a small (30S) and a large (50S) subunit. The 30S small subunit contains 1 molecule of ribosomal RNA (16S rRNA) and 24 different proteins. The 50S large subunit contains 3 rRNA molecules (23S, 5S and 4.5S rRNA) and 33 different proteins.

Its subcellular location is the plastid. The protein localises to the chloroplast. Functionally, component of the chloroplast ribosome (chloro-ribosome), a dedicated translation machinery responsible for the synthesis of chloroplast genome-encoded proteins, including proteins of the transcription and translation machinery and components of the photosynthetic apparatus. The polypeptide is Large ribosomal subunit protein bL27c (RPL27) (Spinacia oleracea (Spinach)).